Consider the following 136-residue polypeptide: Small ribosomal subunit protein uS9 (136 aa).

It belongs to the universal ribosomal protein uS9 family.

The protein is Small ribosomal subunit protein uS9 of Borreliella burgdorferi (strain ZS7) (Borrelia burgdorferi).